We begin with the raw amino-acid sequence, 329 residues long: Protein STRICTOSIDINE SYNTHASE-LIKE 11 (329 aa).

Positions 1–23 (MMRSFVSLISLLLLLSFSSSVLS) are cleaved as a signal peptide. Residues asparagine 37 and asparagine 79 are each glycosylated (N-linked (GlcNAc...) asparagine).

The protein belongs to the strictosidine synthase family.

It is found in the vacuole. The catalysed reaction is 3alpha(S)-strictosidine + H2O = secologanin + tryptamine. Its pathway is alkaloid biosynthesis; 3alpha(S)-strictosidine biosynthesis; 3alpha(S)-strictosidine from secologanin and tryptamine: step 1/1. In terms of biological role, catalyzes the stereospecific condensation of tryptamine with secologanin to form strictosidine, the key intermediate of indole alkaloid biosynthesis. The sequence is that of Protein STRICTOSIDINE SYNTHASE-LIKE 11 from Arabidopsis thaliana (Mouse-ear cress).